Here is a 321-residue protein sequence, read N- to C-terminus: Ferredoxin--NADP reductase (321 aa).

FAD-binding residues include Asp28, Gln36, Tyr41, Ala81, Phe115, Asp274, and Ser315.

This sequence belongs to the ferredoxin--NADP reductase type 2 family. As to quaternary structure, homodimer. FAD serves as cofactor.

It carries out the reaction 2 reduced [2Fe-2S]-[ferredoxin] + NADP(+) + H(+) = 2 oxidized [2Fe-2S]-[ferredoxin] + NADPH. The sequence is that of Ferredoxin--NADP reductase from Frankia casuarinae (strain DSM 45818 / CECT 9043 / HFP020203 / CcI3).